The primary structure comprises 200 residues: Large ribosomal subunit protein uL13 (200 aa).

Belongs to the universal ribosomal protein uL13 family. Component of the large ribosomal subunit. Mature ribosomes consist of a small (40S) and a large (60S) subunit. The 40S subunit contains about 32 different proteins and 1 molecule of RNA (18S). The 60S subunit contains 45 different proteins and 3 molecules of RNA (25S, 5.8S and 5S).

The protein localises to the cytoplasm. In terms of biological role, component of the ribosome, a large ribonucleoprotein complex responsible for the synthesis of proteins in the cell. The small ribosomal subunit (SSU) binds messenger RNAs (mRNAs) and translates the encoded message by selecting cognate aminoacyl-transfer RNA (tRNA) molecules. The large subunit (LSU) contains the ribosomal catalytic site termed the peptidyl transferase center (PTC), which catalyzes the formation of peptide bonds, thereby polymerizing the amino acids delivered by tRNAs into a polypeptide chain. The nascent polypeptides leave the ribosome through a tunnel in the LSU and interact with protein factors that function in enzymatic processing, targeting, and the membrane insertion of nascent chains at the exit of the ribosomal tunnel. In Candida albicans (strain SC5314 / ATCC MYA-2876) (Yeast), this protein is Large ribosomal subunit protein uL13.